A 180-amino-acid chain; its full sequence is NAD(P)H-quinone oxidoreductase subunit 6, chloroplastic (180 aa).

The next 5 helical transmembrane spans lie at 10 to 30, 32 to 52, 57 to 77, 95 to 115, and 153 to 173; these read ILLV…VLLT, IIYS…LYIL, FVAA…IVFA, VGDG…ITII, and FLPF…AITI.

The protein belongs to the complex I subunit 6 family. NDH is composed of at least 16 different subunits, 5 of which are encoded in the nucleus.

It is found in the plastid. It localises to the chloroplast thylakoid membrane. The catalysed reaction is a plastoquinone + NADH + (n+1) H(+)(in) = a plastoquinol + NAD(+) + n H(+)(out). It carries out the reaction a plastoquinone + NADPH + (n+1) H(+)(in) = a plastoquinol + NADP(+) + n H(+)(out). In terms of biological role, NDH shuttles electrons from NAD(P)H:plastoquinone, via FMN and iron-sulfur (Fe-S) centers, to quinones in the photosynthetic chain and possibly in a chloroplast respiratory chain. The immediate electron acceptor for the enzyme in this species is believed to be plastoquinone. Couples the redox reaction to proton translocation, and thus conserves the redox energy in a proton gradient. The polypeptide is NAD(P)H-quinone oxidoreductase subunit 6, chloroplastic (ndhG) (Cycas taitungensis (Prince sago)).